Reading from the N-terminus, the 356-residue chain is Growth hormone-regulated TBC protein 1-A (356 aa).

Residues 1 to 29 (MEERDRTGRTGQPQHRINQPSTARERANS) are disordered. The span at 9 to 22 (RTGQPQHRINQPST) shows a compositional bias: polar residues. Positions 87–277 (GVPNEHRPLV…RIWDCLFYEG (191 aa)) constitute a Rab-GAP TBC domain.

May act as a GTPase-activating protein for Rab family protein(s). This chain is Growth hormone-regulated TBC protein 1-A (grtp1a), found in Danio rerio (Zebrafish).